We begin with the raw amino-acid sequence, 264 residues long: Carbohydrate deacetylase (264 aa).

The active-site Proton acceptor is D20. The Mg(2+) site is built by D21, H60, and H127. The Proton donor role is filled by H215.

Belongs to the YdjC deacetylase family. In terms of assembly, homodimer. Mg(2+) serves as cofactor.

Probably catalyzes the deacetylation of acetylated carbohydrates an important step in the degradation of oligosaccharides. In Thermus thermophilus (strain ATCC 27634 / DSM 579 / HB8), this protein is Carbohydrate deacetylase.